The chain runs to 551 residues: Colicin E3 (551 aa).

Disordered stretches follow at residues 1–74, 243–269, and 293–320; these read MSGG…SGGG, TLSPGVTNNTDKDVRPAGFTQGGNTRD, and PDQVKQRQDEENRRQQEWDATHPVEAAE. The translocation (T) domain stretch occupies residues 1–315; that stretch reads MSGGDGRGHN…RQQEWDATHP (315 aa). The segment covering 20 to 35 has biased composition (gly residues); that stretch reads INGGPTGLGVGGGASD. The Binds to TolB motif lies at 35 to 39; sequence DGSGW. A compositionally biased stretch (low complexity) spans 36–45; it reads GSGWSSENNP. Positions 46-74 are enriched in gly residues; sequence WGGGSGSGIHWGGGSGHGNGGGNGNSGGG. Positions 296-320 are enriched in basic and acidic residues; sequence VKQRQDEENRRQQEWDATHPVEAAE. Residues 316-378 are a coiled coil; sequence VEAAERNYER…IAEIKQFNRF (63 aa). The tract at residues 316–450 is receptor-binding (R) domain; that stretch reads VEAAERNYER…SAENNLNDEK (135 aa). The Hairpin motif lies at 379-385; sequence AHDPMAG. Residues 386–450 are a coiled coil; it reads GHRMWQMAGL…SAENNLNDEK (65 aa). The interval 406 to 505 is disordered; it reads NKQAAFDAAA…KRWTGDKGRK (100 aa). The segment covering 430–472 has biased composition (basic and acidic residues); that stretch reads ESRKKKEDKKRSAENNLNDEKNKPRKGFKDYGHDYHPAPKTEN. Residues 451 to 456 are linker; it reads NKPRKG. A ribosome inactivating activity region spans residues 455-551; the sequence is KGFKDYGHDY…DPKRNIKKYL (97 aa). The cytotoxic RNase (C) domain stretch occupies residues 457–551; sequence FKDYGHDYHP…DPKRNIKKYL (95 aa). Catalysis depends on H513, which acts as the Proton donor. E517 serves as the catalytic Proton acceptor. The interval 517-551 is disordered; sequence EGYRASDGQHLGSFDPKTGNQLKGPDPKRNIKKYL. The segment at 530-551 is binding of immunity protein; sequence FDPKTGNQLKGPDPKRNIKKYL. R545 is an active-site residue.

The protein belongs to the cloacin colicin family. As to quaternary structure, native colicin E3 is a 1:1 complex of A chain and protein B (cognate immunity protein, Im3); protein A is 1,000-fold more active in inactivating ribosomes than the native complex. The cytotoxic fragment (residues 456-551, C95) forms a 1:1 complex with Im3. The receptor-binding (R) domain binds obliquely to its receptor BtuB without displacing BtuB's central plug; binding unfolds the R domain. The N-terminal 83 residues (T83) bind OmpF; trimeric complexes with colicin E3, BtuB and OmpF can be cross-linked and immunoprecipitated. Probably inserts into the OmpF pore as an unfolded peptide and spans the OmpF pore. In a complex with T.thermophilus 70S ribosomes, cytotoxic fragment C96 contacts 16S rRNA, 23S rRNA, mRNA, P-site tRNA and ribosomal protein uS12.

It is found in the secreted. Functionally, colicins are polypeptide toxins produced by and active against E.coli and closely related bacteria. Cleaves 16S rRNA between adenosine-1492 and guanosine-1493 (E.coli 16S rRNA numbering), releasing a 49 nucleotide (nt) 'colicin' fragment. Inactivates 70S ribosomes or 30S subunits by endonucleolytically cleaving 16S RNA at a specific site about 50 nt from its C-terminus. Produces 5'-OH-guanosine and a 2',3'-cyclic phosphate adenosine. Mixing a susceptible (e.g. strain K12 / A19) and colicin E3 producing strain results in total protein translation inhibition within 11 minutes. Its activity is inhibited by cognate immunity protein Im3. Uses BtuB, the vitamin B transporter, as a receptor on the outer membrane; binds via the receptor (R) domain. Then the translocation domain (T) probably 'fishes' for its outer membrane translocon protein, OmpF. The N-terminal 83 residues (T83) can bind to and occlude OmpF channels. A complex of the cytotoxic C-terminal 96 residues (C96) plus the immunity protein does not occlude OmpF; upon complex separation from the immunity protein C96 becomes disordered and is able to bind OmpF. The N-terminus probably binds TolB and then reinserts into an empty pore of trimeric OmpF; the rest of the protein is pulled through OmpF and crosses the inner membrane, where the cytotoxic fragment is probably released by protease FtsH. This is Colicin E3 (ceaC) from Escherichia coli.